The sequence spans 340 residues: Ketol-acid reductoisomerase (NADP(+)) (340 aa).

Residues 1–182 (MRVYYDRDCD…GGGRSGIIET (182 aa)) form the KARI N-terminal Rossmann domain. Residues 24 to 27 (YGSQ), Arg-48, Ser-51, Ser-53, and 83 to 86 (DELQ) each bind NADP(+). His-108 is an active-site residue. Gly-134 is a binding site for NADP(+). The region spanning 183-329 (NFREECETDL…ETLRGMMPWI (147 aa)) is the KARI C-terminal knotted domain. Mg(2+)-binding residues include Asp-191, Glu-195, Glu-227, and Glu-231. Residue Ser-252 participates in substrate binding.

The protein belongs to the ketol-acid reductoisomerase family. Requires Mg(2+) as cofactor.

The enzyme catalyses (2R)-2,3-dihydroxy-3-methylbutanoate + NADP(+) = (2S)-2-acetolactate + NADPH + H(+). It catalyses the reaction (2R,3R)-2,3-dihydroxy-3-methylpentanoate + NADP(+) = (S)-2-ethyl-2-hydroxy-3-oxobutanoate + NADPH + H(+). The protein operates within amino-acid biosynthesis; L-isoleucine biosynthesis; L-isoleucine from 2-oxobutanoate: step 2/4. It functions in the pathway amino-acid biosynthesis; L-valine biosynthesis; L-valine from pyruvate: step 2/4. In terms of biological role, involved in the biosynthesis of branched-chain amino acids (BCAA). Catalyzes an alkyl-migration followed by a ketol-acid reduction of (S)-2-acetolactate (S2AL) to yield (R)-2,3-dihydroxy-isovalerate. In the isomerase reaction, S2AL is rearranged via a Mg-dependent methyl migration to produce 3-hydroxy-3-methyl-2-ketobutyrate (HMKB). In the reductase reaction, this 2-ketoacid undergoes a metal-dependent reduction by NADPH to yield (R)-2,3-dihydroxy-isovalerate. This is Ketol-acid reductoisomerase (NADP(+)) from Jannaschia sp. (strain CCS1).